The following is a 375-amino-acid chain: 23S rRNA (uracil(747)-C(5))-methyltransferase RlmC (375 aa).

[4Fe-4S] cluster contacts are provided by cysteine 3, cysteine 11, cysteine 14, and cysteine 87. S-adenosyl-L-methionine is bound by residues glutamine 212, phenylalanine 241, glutamate 262, and asparagine 307. The Nucleophile role is filled by cysteine 334.

The protein belongs to the class I-like SAM-binding methyltransferase superfamily. RNA M5U methyltransferase family. RlmC subfamily.

It carries out the reaction uridine(747) in 23S rRNA + S-adenosyl-L-methionine = 5-methyluridine(747) in 23S rRNA + S-adenosyl-L-homocysteine + H(+). Its function is as follows. Catalyzes the formation of 5-methyl-uridine at position 747 (m5U747) in 23S rRNA. The protein is 23S rRNA (uracil(747)-C(5))-methyltransferase RlmC of Xenorhabdus nematophila (strain ATCC 19061 / DSM 3370 / CCUG 14189 / LMG 1036 / NCIMB 9965 / AN6).